A 274-amino-acid chain; its full sequence is MLTSKKEMQSSENKQEENLALLLTNYISYQNIVIFTGGNQFKIRNKKEFTEYTIESNSLFFLAKNTHWDMEIVGIDNSNPYRKIIIDDALIKLLHSISSDDSCYVKKKIFTANLNEMQLNIVSNIITDIKYSGNNKKIFKILYLLSFFNDYNDIVNVILSASSKSIVDRVIKVIELDISKNWKLGDVSSSMFMSDSCLRKQLNKENLTFKKIMLDIKMKHASLFLRTTDKNIDEISCLVGFNSTSYFIKVFKEYYNTTPKKYNGVYSITQGTLP.

Positions 168–265 (DRVIKVIELD…NTTPKKYNGV (98 aa)) constitute an HTH araC/xylS-type domain. 2 consecutive DNA-binding regions (H-T-H motif) follow at residues 185-206 (GDVSSSMFMSDSCLRKQLNKEN) and 232-255 (IDEISCLVGFNSTSYFIKVFKEYY).

Could help in the transcriptional activator of eaeA expression in enteropathogenic E.coli. However, it seems that it is PerC which acts as an activator. The chain is Transcriptional activator PerA (perA) from Escherichia coli O127:H6 (strain E2348/69 / EPEC).